Consider the following 465-residue polypeptide: 3-isopropylmalate dehydratase large subunit (465 aa).

[4Fe-4S] cluster is bound by residues Cys-346, Cys-406, and Cys-409.

It belongs to the aconitase/IPM isomerase family. LeuC type 1 subfamily. In terms of assembly, heterodimer of LeuC and LeuD. It depends on [4Fe-4S] cluster as a cofactor.

The catalysed reaction is (2R,3S)-3-isopropylmalate = (2S)-2-isopropylmalate. It functions in the pathway amino-acid biosynthesis; L-leucine biosynthesis; L-leucine from 3-methyl-2-oxobutanoate: step 2/4. In terms of biological role, catalyzes the isomerization between 2-isopropylmalate and 3-isopropylmalate, via the formation of 2-isopropylmaleate. The chain is 3-isopropylmalate dehydratase large subunit from Leptospira interrogans serogroup Icterohaemorrhagiae serovar copenhageni (strain Fiocruz L1-130).